The sequence spans 211 residues: N-(5'-phosphoribosyl)anthranilate isomerase (211 aa).

This sequence belongs to the TrpF family.

The enzyme catalyses N-(5-phospho-beta-D-ribosyl)anthranilate = 1-(2-carboxyphenylamino)-1-deoxy-D-ribulose 5-phosphate. It participates in amino-acid biosynthesis; L-tryptophan biosynthesis; L-tryptophan from chorismate: step 3/5. The sequence is that of N-(5'-phosphoribosyl)anthranilate isomerase from Chromohalobacter salexigens (strain ATCC BAA-138 / DSM 3043 / CIP 106854 / NCIMB 13768 / 1H11).